The sequence spans 76 residues: Sulfur carrier protein TusA (76 aa).

The active-site Cysteine persulfide intermediate is cysteine 14.

It belongs to the sulfur carrier protein TusA family. In terms of assembly, interacts with IscS.

The protein resides in the cytoplasm. Its pathway is tRNA modification. Functionally, sulfur carrier protein involved in sulfur trafficking in the cell. Part of a sulfur-relay system required for 2-thiolation during synthesis of 2-thiouridine of the modified wobble base 5-methylaminomethyl-2-thiouridine (mnm(5)s(2)U) in tRNA. Interacts with IscS and stimulates its cysteine desulfurase activity. Accepts an activated sulfur from IscS, which is then transferred to TusD, and thus determines the direction of sulfur flow from IscS to 2-thiouridine formation. Also appears to be involved in sulfur transfer for the biosynthesis of molybdopterin. In Buchnera aphidicola subsp. Acyrthosiphon pisum (strain Tuc7), this protein is Sulfur carrier protein TusA.